We begin with the raw amino-acid sequence, 457 residues long: Adenylosuccinate synthetase isozyme 2 B (457 aa).

GTP is bound by residues 40–46 (GDEGKGK) and 68–70 (GHT). D41 serves as the catalytic Proton acceptor. Mg(2+)-binding residues include D41 and G68. Residue D41 participates in substrate binding. IMP-binding positions include 41 to 44 (DEGK), 66 to 69 (NAGH), T163, R177, N256, T271, and R335. H69 acts as the Proton donor in catalysis. Substrate is bound at residue 331–337 (VTTGRKR). Residues R337, 363-365 (KLD), and 445-448 (GVGK) contribute to the GTP site.

This sequence belongs to the adenylosuccinate synthetase family. As to quaternary structure, homodimer. It depends on Mg(2+) as a cofactor.

Its subcellular location is the cytoplasm. It localises to the mitochondrion. The catalysed reaction is IMP + L-aspartate + GTP = N(6)-(1,2-dicarboxyethyl)-AMP + GDP + phosphate + 2 H(+). The protein operates within purine metabolism; AMP biosynthesis via de novo pathway; AMP from IMP: step 1/2. With respect to regulation, inhibited competitively by AMP and IMP and non-competitively by fructose 1,6-bisphosphate. Its function is as follows. Plays an important role in the de novo pathway and in the salvage pathway of purine nucleotide biosynthesis. Catalyzes the first committed step in the biosynthesis of AMP from IMP. The polypeptide is Adenylosuccinate synthetase isozyme 2 B (adss2-b) (Xenopus tropicalis (Western clawed frog)).